We begin with the raw amino-acid sequence, 375 residues long: Alcohol dehydrogenase B (375 aa).

Cys40, His62, Cys92, Cys95, Cys98, Cys106, and Cys169 together coordinate Zn(2+).

The protein belongs to the zinc-containing alcohol dehydrogenase family. Requires Zn(2+) as cofactor.

It localises to the cytoplasm. It catalyses the reaction a primary alcohol + NAD(+) = an aldehyde + NADH + H(+). It carries out the reaction a secondary alcohol + NAD(+) = a ketone + NADH + H(+). In Mycobacterium bovis (strain ATCC BAA-935 / AF2122/97), this protein is Alcohol dehydrogenase B (adhB).